Reading from the N-terminus, the 535-residue chain is Triacylglyceride transporter MHAS_02168/C731_2106 (535 aa).

Topologically, residues 1 to 18 (MAFPQTPNRLIRPRRTSR) are cytoplasmic. Residues 19–39 (GIAISAGGLAVLLGALDTYVV) traverse the membrane as a helical segment. Residues 40–60 (VSIVTDIMRDVGIAVNQIQRV) are Periplasmic-facing. A helical membrane pass occupies residues 61–82 (TPIITGYLLGYIAAMPLLGRAS). Residues 83-86 (DRFG) lie on the Cytoplasmic side of the membrane. The helical transmembrane segment at 87–107 (RKLLIQISLAGFALGSVITAL) threads the bilayer. At 108-111 (ATNL) the chain is on the periplasmic side. Residues 112–136 (DVLVAGRVIQGAASGALLPVTLALA) form a helical membrane-spanning segment. Over 137–145 (ADLWATHKR) the chain is Cytoplasmic. Residues 146–167 (AAVLGGVGAAQELGAVLGPIYG) form a helical membrane-spanning segment. Residues 168 to 177 (IFVVWLFHHW) lie on the Periplasmic side of the membrane. Residues 178–198 (QAVFWVNVPLALIAMVLIHIS) form a helical membrane-spanning segment. Topologically, residues 199–212 (LPPRVRTEEPQRVD) are cytoplasmic. A helical membrane pass occupies residues 213 to 230 (VTGGLLLALALGLATIGL). Residues 231-243 (YNAEPDGKQVLPE) lie on the Periplasmic side of the membrane. The helical transmembrane segment at 244-263 (YGPPLIIGAVIAAVAFLVWE) threads the bilayer. Residues 264-278 (RFARTRLLDPAGVRF) lie on the Cytoplasmic side of the membrane. A helical membrane pass occupies residues 279–300 (RPFLIALLVSLVTGGALMVTLV). Residues 301–320 (NVELFGQGVLGLDQDEAVFL) are Periplasmic-facing. The next 2 helical transmembrane spans lie at 321 to 343 (LARFLIALPVGALLGGWIATRVG) and 344 to 364 (DRAVTAVGLLIAAGGFYLIAQ). Topologically, residues 365-384 (WPADVLESRHDLGFVSLPTL) are periplasmic. The tract at residues 373 to 382 (RHDLGFVSLP) is beta-hairpin. The chain crosses the membrane as a helical span at residues 385 to 407 (DTDLAIAGFGLGLVIAPLTSAAL). Residues 408 to 415 (RVVPAAQH) are Cytoplasmic-facing. Residues 416–440 (GIASAAVVVARMIGMLIGIAALSAW) traverse the membrane as a helical segment. Residues 441–487 (GLYRFNQYLKEQLAALPPAPADFPGGQMAGQMMRLRTATVQAYVLQY) lie on the Periplasmic side of the membrane. The chain crosses the membrane as a helical span at residues 488–507 (GEIFAITAGLCVFGAVLGLF). Residues 508-535 (IAGRREHAEESADAVDGVSNARDRAPSA) are Cytoplasmic-facing.

It belongs to the major facilitator superfamily. P55 (TC 2.A.1.3.34) family.

The protein localises to the cell inner membrane. Functionally, in association with lipoprotein LprG transports triacylglycerides (TAG) across the inner cell membrane, probably transfering them to lipoprotein LprG in the periplasm. TAG probably regulates lipid metabolism and growth regulation and plays a structural role in the outer membrane. Mutagenesis and molecular modeling suggests TAG (and maybe other lipids) enters the central cavity of the P55 transporter from within the cell inner membrane via clefts on the cytoplasmic face of P55 between TM5-TM8 and TM2-TM11. From there the lipid is probably transferred to the hydrophobic cavity of LprG. The lprG-MHAS_02167/C731_2107 operon complements the vancomycin sensitivity of an M.smegmatis knockout of the same operon. Probably required with LprG for normal surface localization of lipoarabinomannan (LAM). In Mycolicibacterium hassiacum (strain DSM 44199 / CIP 105218 / JCM 12690 / 3849) (Mycobacterium hassiacum), this protein is Triacylglyceride transporter MHAS_02168/C731_2106.